A 345-amino-acid polypeptide reads, in one-letter code: Heat-inducible transcription repressor HrcA (345 aa).

The protein belongs to the HrcA family.

Functionally, negative regulator of class I heat shock genes (grpE-dnaK-dnaJ and groELS operons). Prevents heat-shock induction of these operons. The sequence is that of Heat-inducible transcription repressor HrcA from Corynebacterium diphtheriae (strain ATCC 700971 / NCTC 13129 / Biotype gravis).